We begin with the raw amino-acid sequence, 457 residues long: Cyanidin 3-O-galactoside 2''-O-xylosyltransferase FGGT1 (457 aa).

This sequence belongs to the UDP-glycosyltransferase family. Expressed in ovaries.

It catalyses the reaction cyanidin 3-O-beta-D-galactoside + UDP-alpha-D-xylose = cyanidin 3-O-[beta-D-xylosyl-(1-&gt;2)-beta-D-galactoside] + UDP + H(+). The protein operates within pigment biosynthesis; anthocyanin biosynthesis. Its function is as follows. Xylosyltransferase involved in anthocyanin biosynthesis by catalyzing the xylosylation of cyanidin 3-O-galactoside to form cyanidin 3-O-[2-O-(-xylosyl)-galactoside]. Required for the accumulation of anthocyanin in red-fleshed kiwifruit varieties. This chain is Cyanidin 3-O-galactoside 2''-O-xylosyltransferase FGGT1, found in Actinidia chinensis var. chinensis (Chinese soft-hair kiwi).